A 288-amino-acid polypeptide reads, in one-letter code: Pyridoxal kinase PdxY (288 aa).

Substrate contacts are provided by residues Ser9 and 44–45 (TQ). Residues Asp111, Glu148, and Lys181 each coordinate ATP. A substrate-binding site is contributed by Asp224.

Belongs to the pyridoxine kinase family. PdxY subfamily. In terms of assembly, homodimer. The cofactor is Mg(2+).

It catalyses the reaction pyridoxal + ATP = pyridoxal 5'-phosphate + ADP + H(+). It participates in cofactor metabolism; pyridoxal 5'-phosphate salvage; pyridoxal 5'-phosphate from pyridoxal: step 1/1. Functionally, pyridoxal kinase involved in the salvage pathway of pyridoxal 5'-phosphate (PLP). Catalyzes the phosphorylation of pyridoxal to PLP. This is Pyridoxal kinase PdxY from Haemophilus influenzae (strain PittEE).